The sequence spans 223 residues: Adenylate kinase (223 aa).

10–15 provides a ligand contact to ATP; the sequence is GSGKGT. The segment at 30-59 is NMP; the sequence is ESGAIFREHIGGGTELGMKAKGYIDKGELV. AMP-binding positions include Ser31, Arg36, 57-59, 84-87, and Gln91; these read ELV and GFPR. The segment at 125-164 is LID; that stretch reads GRRLCANDPNHPNNIFIDAIKPNGDKCRVCGGDLKTRSDD. Residue Arg126 coordinates ATP. The AMP site is built by Arg161 and Arg173. Gly209 provides a ligand contact to ATP.

The protein belongs to the adenylate kinase family. In terms of assembly, monomer.

It is found in the cytoplasm. It carries out the reaction AMP + ATP = 2 ADP. Its pathway is purine metabolism; AMP biosynthesis via salvage pathway; AMP from ADP: step 1/1. Catalyzes the reversible transfer of the terminal phosphate group between ATP and AMP. Plays an important role in cellular energy homeostasis and in adenine nucleotide metabolism. In Solidesulfovibrio magneticus (strain ATCC 700980 / DSM 13731 / RS-1) (Desulfovibrio magneticus), this protein is Adenylate kinase.